A 253-amino-acid chain; its full sequence is Allene oxide cyclase 2, chloroplastic (253 aa).

The transit peptide at 1–77 (MASSAVSLQS…SQNGNIENPR (77 aa)) directs the protein to the chloroplast.

The protein belongs to the allene oxide cyclase family. Highly expressed in fully developed leaves.

The protein localises to the plastid. Its subcellular location is the chloroplast. It carries out the reaction (9Z,13S,15Z)-12,13-epoxyoctadeca-9,11,15-trienoate = (9S,13S,15Z)-12-oxophyto-10,15-dienoate. Its function is as follows. Involved in the production of 12-oxo-phytodienoic acid (OPDA), a precursor of jasmonic acid. This is Allene oxide cyclase 2, chloroplastic (AOC2) from Arabidopsis thaliana (Mouse-ear cress).